The sequence spans 401 residues: Enoyl-[acyl-carrier-protein] reductase [NADH] (401 aa).

NAD(+)-binding positions include 48 to 53, 74 to 75, 111 to 112, and 140 to 141; these read GASSGY, FE, DA, and LA. Tyr-226 lines the substrate pocket. Residue Tyr-236 is the Proton donor of the active site. Residues Lys-245 and 274 to 276 each bind NAD(+); that span reads VVT.

It belongs to the TER reductase family. As to quaternary structure, monomer.

It carries out the reaction a 2,3-saturated acyl-[ACP] + NAD(+) = a (2E)-enoyl-[ACP] + NADH + H(+). The protein operates within lipid metabolism; fatty acid biosynthesis. Involved in the final reduction of the elongation cycle of fatty acid synthesis (FAS II). Catalyzes the reduction of a carbon-carbon double bond in an enoyl moiety that is covalently linked to an acyl carrier protein (ACP). The chain is Enoyl-[acyl-carrier-protein] reductase [NADH] from Xylella fastidiosa (strain 9a5c).